The chain runs to 326 residues: Malate dehydrogenase (326 aa).

12-18 (GGTGQIA) is a binding site for NAD(+). Substrate is bound by residues arginine 93 and arginine 99. Residues asparagine 106, glutamine 113, and 130 to 132 (VGN) each bind NAD(+). The substrate site is built by asparagine 132 and arginine 163. The Proton acceptor role is filled by histidine 188.

The protein belongs to the LDH/MDH superfamily. MDH type 2 family.

The enzyme catalyses (S)-malate + NAD(+) = oxaloacetate + NADH + H(+). Catalyzes the reversible oxidation of malate to oxaloacetate. In Chlamydia trachomatis serovar D (strain ATCC VR-885 / DSM 19411 / UW-3/Cx), this protein is Malate dehydrogenase.